Here is a 429-residue protein sequence, read N- to C-terminus: RNA-binding protein BRN2 (429 aa).

3 RRM domains span residues 12 to 93 (VKLF…YADG), 100 to 180 (HKLF…WADT), and 330 to 408 (ANLF…LKRD). The segment at 410–429 (GQQQQQQQSKNPLFNGLLNS) is disordered. The span at 418-429 (SKNPLFNGLLNS) shows a compositional bias: polar residues.

In terms of tissue distribution, expressed in roots, stems, flowers and siliques.

The protein localises to the cytoplasm. Functionally, RNA-binding protein involved in the regulation of flowering time. Acts as a repressor of the activity of SOC1, a transcriptional activator of flowering time. Binds to the 3'-UTR of SOC1 mRNA in the cytoplasm and participates in SOC1 mRNA decay, mediated by the distal region of the SOC1 3'-UTR. In Arabidopsis thaliana (Mouse-ear cress), this protein is RNA-binding protein BRN2.